The chain runs to 137 residues: Large ribosomal subunit protein uL16 (137 aa).

Belongs to the universal ribosomal protein uL16 family. In terms of assembly, part of the 50S ribosomal subunit.

Functionally, binds 23S rRNA and is also seen to make contacts with the A and possibly P site tRNAs. The sequence is that of Large ribosomal subunit protein uL16 from Lactococcus lactis subsp. cremoris (strain SK11).